A 317-amino-acid polypeptide reads, in one-letter code: tRNA-cytidine(32) 2-sulfurtransferase (317 aa).

The interval 1-29 is disordered; that stretch reads MNTANNTLPTAADWAGEDGAPDAADTRKI. The short motif at 65–70 is the PP-loop motif element; the sequence is SGGKDS. [4Fe-4S] cluster contacts are provided by Cys-140, Cys-143, and Cys-231.

This sequence belongs to the TtcA family. In terms of assembly, homodimer. Mg(2+) serves as cofactor. The cofactor is [4Fe-4S] cluster.

The protein resides in the cytoplasm. It carries out the reaction cytidine(32) in tRNA + S-sulfanyl-L-cysteinyl-[cysteine desulfurase] + AH2 + ATP = 2-thiocytidine(32) in tRNA + L-cysteinyl-[cysteine desulfurase] + A + AMP + diphosphate + H(+). It participates in tRNA modification. Its function is as follows. Catalyzes the ATP-dependent 2-thiolation of cytidine in position 32 of tRNA, to form 2-thiocytidine (s(2)C32). The sulfur atoms are provided by the cysteine/cysteine desulfurase (IscS) system. In Acidovorax ebreus (strain TPSY) (Diaphorobacter sp. (strain TPSY)), this protein is tRNA-cytidine(32) 2-sulfurtransferase.